Consider the following 310-residue polypeptide: Carbamate kinase 1 (310 aa).

Belongs to the carbamate kinase family.

Its subcellular location is the cytoplasm. The enzyme catalyses hydrogencarbonate + NH4(+) + ATP = carbamoyl phosphate + ADP + H2O + H(+). The protein operates within metabolic intermediate metabolism; carbamoyl phosphate degradation; CO(2) and NH(3) from carbamoyl phosphate: step 1/1. The sequence is that of Carbamate kinase 1 (arcC1) from Staphylococcus epidermidis (strain ATCC 12228 / FDA PCI 1200).